A 476-amino-acid polypeptide reads, in one-letter code: Amidophosphoribosyltransferase (476 aa).

Residues 1 to 11 (MLAEIKGLNEE) constitute a propeptide that is removed on maturation. The active-site Nucleophile is the C12. A Glutamine amidotransferase type-2 domain is found at 12–231 (CGVFGIWGHE…PGEMLIINDE (220 aa)). C247 is a [4Fe-4S] cluster binding site. Positions 294, 356, and 357 each coordinate Mg(2+). The [4Fe-4S] cluster site is built by C393, C448, and C451.

In the C-terminal section; belongs to the purine/pyrimidine phosphoribosyltransferase family. Homotetramer. Requires Mg(2+) as cofactor. [4Fe-4S] cluster serves as cofactor.

The catalysed reaction is 5-phospho-beta-D-ribosylamine + L-glutamate + diphosphate = 5-phospho-alpha-D-ribose 1-diphosphate + L-glutamine + H2O. It participates in purine metabolism; IMP biosynthesis via de novo pathway; N(1)-(5-phospho-D-ribosyl)glycinamide from 5-phospho-alpha-D-ribose 1-diphosphate: step 1/2. Its activity is regulated as follows. Allosterically regulated; subject to end product regulation by purine nucleotides. Its function is as follows. Catalyzes the formation of phosphoribosylamine from phosphoribosylpyrophosphate (PRPP) and glutamine. The protein is Amidophosphoribosyltransferase of Bacillus subtilis (strain 168).